The primary structure comprises 495 residues: Alkaline protease 2 (495 aa).

The signal sequence occupies residues 1 to 16 (MKGYLSLSILPLLVAA). The propeptide occupies 17 to 136 (SPVVVDSIHN…IEKDSEVHTM (120 aa)). The Inhibitor I9 domain maps to 43 to 136 (SYIVVFKKHV…IEKDSEVHTM (94 aa)). A Peptidase S8 domain is found at 146 to 452 (PWGLARISHR…GGSSNYTDII (307 aa)). Residues aspartate 182 and histidine 214 each act as charge relay system in the active site. Residue asparagine 284 is glycosylated (N-linked (GlcNAc...) asparagine). Catalysis depends on serine 380, which acts as the Charge relay system. Asparagine 447 and asparagine 460 each carry an N-linked (GlcNAc...) asparagine glycan.

It belongs to the peptidase S8 family.

It carries out the reaction Hydrolysis of proteins with broad specificity, and of Bz-Arg-OEt &gt; Ac-Tyr-OEt. Does not hydrolyze peptide amides.. Alkaline protease that allows assimilation of proteinaceous substrates. Acts as a significant virulence factor in invasive aspergillosis. Required for regular sporulation. This chain is Alkaline protease 2 (alp2), found in Aspergillus fumigatus (strain CBS 144.89 / FGSC A1163 / CEA10) (Neosartorya fumigata).